A 334-amino-acid polypeptide reads, in one-letter code: Thiamine thiazole synthase (334 aa).

Substrate is bound by residues Cys86, 107–108 (EA), Gly115, and Val183. Residue Cys221 is modified to 2,3-didehydroalanine (Cys). Residues Asp223, His238, Met290, and 300–302 (RMG) contribute to the substrate site.

It belongs to the THI4 family. Homooctamer. Requires Fe cation as cofactor. In terms of processing, during the catalytic reaction, a sulfide is transferred from Cys-221 to a reaction intermediate, generating a dehydroalanine residue.

The protein localises to the cytoplasm. Its subcellular location is the nucleus. It carries out the reaction [ADP-thiazole synthase]-L-cysteine + glycine + NAD(+) = [ADP-thiazole synthase]-dehydroalanine + ADP-5-ethyl-4-methylthiazole-2-carboxylate + nicotinamide + 3 H2O + 2 H(+). Functionally, involved in biosynthesis of the thiamine precursor thiazole. Catalyzes the conversion of NAD and glycine to adenosine diphosphate 5-(2-hydroxyethyl)-4-methylthiazole-2-carboxylic acid (ADT), an adenylated thiazole intermediate. The reaction includes an iron-dependent sulfide transfer from a conserved cysteine residue of the protein to a thiazole intermediate. The enzyme can only undergo a single turnover, which suggests it is a suicide enzyme. May have additional roles in adaptation to various stress conditions and in DNA damage tolerance. The chain is Thiamine thiazole synthase from Ajellomyces capsulatus (strain G186AR / H82 / ATCC MYA-2454 / RMSCC 2432) (Darling's disease fungus).